The following is a 204-amino-acid chain: Allatotropin (204 aa).

An N-terminal signal peptide occupies residues 1-20; that stretch reads MNLTMQLAVIVAVCLCLAEG. The propeptide occupies 21–35; the sequence is APDVRLTRTKQQRPT. Positions 47–83 are disordered; it reads RGFGKRDRPHPRAERDVDHQAPSARPNRGTPTFKSPT. Phenylalanine 49 is modified (phenylalanine amide). The span at 50–65 shows a compositional bias: basic and acidic residues; sequence GKRDRPHPRAERDVDH. Residues 53–204 constitute a propeptide that is removed on maturation; it reads DRPHPRAERD…LSSEELLRNF (152 aa).

In terms of tissue distribution, expressed extensively in the brain, frontal ganglion and terminal ganglion of the day 2 fifth instar larva (at protein level). Not expressed in the larval brain after day 4 of the fifth instar, or in the brain of the pupa or adult. Expression in the terminal ganglion is localized to cells in the posterior portion of the seventh neuromere of day 2 fifth instar larvae. In the pupa and adult expression is detected in the medial region of neuromere 6, the dorsal medial region of neuromere 7, and the posterior neuromere of the terminal ganglion (at protein level). In the frontal ganglion expression decreases in the wandering larvae and is present at low levels in during pupal ecdysis, but is not detected in the adult. Expressed in the subesophageal ganglion of day 2 fifth instar larva, but not at any time before or after day 2. Not expressed in the abdominal ganglia 1-6 of the day 2 fifth instar larva (at protein level). Expressed in the anterior neuromeres of the pterothoracic ganglion in pupa but not in adult (at protein level). Expressed in the unfused abdominal ganglia of day 10 pupae, and in pharate adult is expressed in median neurosecretory cells M1, M2 and M5, but not in median neurosecretory cells M3 and M4 (at protein level). Not expressed in the differentiated median neurosecretory cells M5 of the larva (at protein level). In the pharate adult brain isoform 3 is the predominant form, with lower levels of isoform 2 and very low levels of isoform 1 detected. In the pharate adult nerve cord isoform 3 is the predominant form, with lower levels of isoform 2 and no isoform 1 detected. In the pharate adult frontal ganglion isoform 3 is expressed, but not isoform 1 and isoform 2.

The protein localises to the secreted. In terms of biological role, neuropeptide stimulator of juvenile hormone synthesis. Cardioregulatory neurohormone that increases heart beat rate in the adult but not in the larva. Inhibits active ion transport in the midgut of feeding fourth instar and day 2 fifth instar larva, but not in the midgut of pharate or wandering fifth instar larva. This chain is Allatotropin, found in Manduca sexta (Tobacco hawkmoth).